The primary structure comprises 302 residues: tRNA pseudouridine synthase B (302 aa).

Histidine 40 serves as a coordination point for substrate. The active-site Nucleophile is aspartate 45. The substrate site is built by tyrosine 73, tyrosine 178, and leucine 199.

Belongs to the pseudouridine synthase TruB family. Type 1 subfamily.

It catalyses the reaction uridine(55) in tRNA = pseudouridine(55) in tRNA. Functionally, responsible for synthesis of pseudouridine from uracil-55 in the psi GC loop of transfer RNAs. In Buchnera aphidicola subsp. Baizongia pistaciae (strain Bp), this protein is tRNA pseudouridine synthase B.